The chain runs to 177 residues: R-phycoerythrin beta chain (177 aa).

Cysteine 50 and cysteine 61 together coordinate phycourobilin. Residue asparagine 72 is modified to N4-methylasparagine. (2R,3E)-phycoerythrobilin is bound by residues cysteine 82 and cysteine 158.

It belongs to the phycobiliprotein family. In terms of assembly, heterodimer of an alpha and a beta chain. Contains two covalently linked phycoerythrobilin chromophores and one covalently linked phycourobilin chromophore.

The protein resides in the plastid. The protein localises to the chloroplast thylakoid membrane. Light-harvesting photosynthetic bile pigment-protein from the phycobiliprotein complex. The sequence is that of R-phycoerythrin beta chain (cpeB) from Pyropia yezoensis (Susabi-nori).